The sequence spans 245 residues: Exosome complex component RRP41 (245 aa).

At A2 the chain carries N-acetylalanine.

This sequence belongs to the RNase PH family. Component of the RNA exosome core complex (Exo-9), composed of EXOSC1, EXOSC2, EXOSC3, EXOSC4, EXOSC5, EXOSC6, EXOSC7, EXOSC8 and EXOSC9; within the complex interacts with EXOSC2, EXOSC7 and EXOSC9. The catalytically inactive RNA exosome core complex (Exo-9) associates with the catalytic subunit EXOSC10/RRP6. Exo-9 may associate with DIS3 to form the nucleolar exosome complex, or DIS3L to form the cytoplasmic exosome complex. Exo-9 is formed by a hexameric base ring consisting of the heterodimers EXOSC4-EXOSC9, EXOSC5-EXOSC8 and EXOSC6-EXOSC7, and a cap ring consisting of EXOSC1, EXOSC2 and EXOSC3. The RNA exosome complex associates with cofactors C1D/RRP47, MPHOSPH6/MPP6 and MTREX/MTR4. Interacts with DDX60. Interacts with DIS3; the interaction is direct.

The protein resides in the cytoplasm. It localises to the nucleus. It is found in the nucleolus. The protein localises to the nucleoplasm. Non-catalytic component of the RNA exosome complex which has 3'-&gt;5' exoribonuclease activity and participates in a multitude of cellular RNA processing and degradation events. In the nucleus, the RNA exosome complex is involved in proper maturation of stable RNA species such as rRNA, snRNA and snoRNA, in the elimination of RNA processing by-products and non-coding 'pervasive' transcripts, such as antisense RNA species and promoter-upstream transcripts (PROMPTs), and of mRNAs with processing defects, thereby limiting or excluding their export to the cytoplasm. The RNA exosome may be involved in Ig class switch recombination (CSR) and/or Ig variable region somatic hypermutation (SHM) by targeting AICDA deamination activity to transcribed dsDNA substrates. In the cytoplasm, the RNA exosome complex is involved in general mRNA turnover and specifically degrades inherently unstable mRNAs containing AU-rich elements (AREs) within their 3' untranslated regions, and in RNA surveillance pathways, preventing translation of aberrant mRNAs. It seems to be involved in degradation of histone mRNA. The catalytic inactive RNA exosome core complex of 9 subunits (Exo-9) is proposed to play a pivotal role in the binding and presentation of RNA for ribonucleolysis, and to serve as a scaffold for the association with catalytic subunits and accessory proteins or complexes. EXOSC4 binds to ARE-containing RNAs. This is Exosome complex component RRP41 (EXOSC4) from Bos taurus (Bovine).